The following is a 547-amino-acid chain: Threonylcarbamoyladenosine tRNA methylthiotransferase (547 aa).

Positions 30–51 are disordered; the sequence is ARKSVVPRARKHKQETGEQMQT. Residues 59-167 form the MTTase N-terminal domain; sequence QKVWLKTWGC…VVEVVDEAIK (109 aa). 6 residues coordinate [4Fe-4S] cluster: C68, C104, C133, C209, C213, and C216. The Radical SAM core domain occupies 195 to 426; it reads RKNPLIEIIS…ALFHSYRPYD (232 aa). Positions 426–488 constitute a TRAM domain; the sequence is DHKMGEQQQV…KHYMKGRPLE (63 aa). Residues 527–547 traverse the membrane as a helical segment; sequence ILAVVLLLSAVLLALLMEKLL.

The protein belongs to the methylthiotransferase family. CDKAL1 subfamily. [4Fe-4S] cluster serves as cofactor.

The protein localises to the endoplasmic reticulum membrane. It carries out the reaction N(6)-L-threonylcarbamoyladenosine(37) in tRNA + (sulfur carrier)-SH + AH2 + 2 S-adenosyl-L-methionine = 2-methylsulfanyl-N(6)-L-threonylcarbamoyladenosine(37) in tRNA + (sulfur carrier)-H + 5'-deoxyadenosine + L-methionine + A + S-adenosyl-L-homocysteine + 2 H(+). Catalyzes the methylthiolation of N6-threonylcarbamoyladenosine (t(6)A), leading to the formation of 2-methylthio-N6-threonylcarbamoyladenosine (ms(2)t(6)A) at position 37 in tRNAs that read codons beginning with adenine. In Danio rerio (Zebrafish), this protein is Threonylcarbamoyladenosine tRNA methylthiotransferase (cdkal1).